The following is a 400-amino-acid chain: Elongation factor Tu 1 (400 aa).

The tr-type G domain occupies 10–209; it reads KPHVNIGTIG…AVDEYIPTPQ (200 aa). The segment at 19-26 is G1; the sequence is GHVDHGKT. Position 19-26 (19-26) interacts with GTP; that stretch reads GHVDHGKT. A Mg(2+)-binding site is contributed by T26. The tract at residues 60–64 is G2; it reads GITIN. Positions 81–84 are G3; the sequence is DCPG. Residues 81–85 and 136–139 each bind GTP; these read DCPGH and NKAD. Positions 136–139 are G4; sequence NKAD. The tract at residues 174-176 is G5; sequence SAL.

Belongs to the TRAFAC class translation factor GTPase superfamily. Classic translation factor GTPase family. EF-Tu/EF-1A subfamily. In terms of assembly, monomer.

The protein localises to the cytoplasm. It catalyses the reaction GTP + H2O = GDP + phosphate + H(+). In terms of biological role, GTP hydrolase that promotes the GTP-dependent binding of aminoacyl-tRNA to the A-site of ribosomes during protein biosynthesis. The polypeptide is Elongation factor Tu 1 (Pelotomaculum thermopropionicum (strain DSM 13744 / JCM 10971 / SI)).